The chain runs to 1050 residues: DNA polymerase I A, chloroplastic/mitochondrial (1050 aa).

The N-terminal 91 residues, 1–91 (MAMGVSLTSH…VVFNGEWELR (91 aa)), are a transit peptide targeting the chloroplast and mitochondrion. Residues 202 to 240 (PRKGLDVGDNMDVNPKGEGIQRPLISDKSSGTANGNKNT) form a disordered region. Over residues 228–240 (DKSSGTANGNKNT) the composition is skewed to polar residues. One can recognise a 3'-5' exonuclease domain in the interval 312-490 (ELICFSIYCG…LYESMTKKLQ (179 aa)). The interval 673–694 (VVEDDDVETSETQKSKTDDETD) is disordered. The polymerase stretch occupies residues 717-1048 (AIASLCEVCS…DAKCAQNWYA (332 aa)).

The protein belongs to the DNA polymerase type-A family. As to expression, expressed in shoot apical meristem.

It is found in the plastid. Its subcellular location is the chloroplast. It localises to the mitochondrion. It carries out the reaction DNA(n) + a 2'-deoxyribonucleoside 5'-triphosphate = DNA(n+1) + diphosphate. Not inhibited by aphidicolin. In terms of biological role, in addition to polymerase activity, this DNA polymerase exhibits 5'-3' exonuclease activity. Required for DNA replication and accumulation in plastids and mitochondria. May be required for DNA repair in both organelles. This is DNA polymerase I A, chloroplastic/mitochondrial (POLIA) from Arabidopsis thaliana (Mouse-ear cress).